We begin with the raw amino-acid sequence, 153 residues long: Guanyl-specific ribonuclease N1 (153 aa).

Positions 1–20 (MVQLLSAFVSLLSVVAVSGA) are cleaved as a signal peptide. Positions 21 to 49 (AIPAPAPEAVVDVAPETATIEPTGNFTAQ) are excised as a propeptide. 2 disulfides stabilise this stretch: Cys51/Cys59 and Cys55/Cys152. Residue His89 is part of the active site. Glu107 acts as the Proton acceptor in catalysis. Catalysis depends on His141, which acts as the Proton donor.

The protein belongs to the ribonuclease N1/T1 family.

It catalyses the reaction [RNA] containing guanosine + H2O = an [RNA fragment]-3'-guanosine-3'-phosphate + a 5'-hydroxy-ribonucleotide-3'-[RNA fragment].. The chain is Guanyl-specific ribonuclease N1 (grn) from Neurospora crassa (strain ATCC 24698 / 74-OR23-1A / CBS 708.71 / DSM 1257 / FGSC 987).